A 195-amino-acid polypeptide reads, in one-letter code: MGLQNEEKLELGCTGLQPKPKKWVLLMVRVVAFLATAAATLVMALNKETKTLVVATVGNTPIKVTLTAKFQHTPAFVFFVIANGMASFHNLLMIMVELCGQKLDYKGMRLAMVAILDMMTVALVSGGASAATFMAELGKNGNSHARWDKICDKFETFCDHGGAALIASSAGLILMMIISVMSIMKLLIKPKSDSS.

Over 1–22 (MGLQNEEKLELGCTGLQPKPKK) the chain is Cytoplasmic. Residues 23-43 (WVLLMVRVVAFLATAAATLVM) form a helical membrane-spanning segment. Residues 44–75 (ALNKETKTLVVATVGNTPIKVTLTAKFQHTPA) lie on the Extracellular side of the membrane. A helical membrane pass occupies residues 76–96 (FVFFVIANGMASFHNLLMIMV). Over 97–109 (ELCGQKLDYKGMR) the chain is Cytoplasmic. Residues 110–130 (LAMVAILDMMTVALVSGGASA) traverse the membrane as a helical segment. Topologically, residues 131-163 (ATFMAELGKNGNSHARWDKICDKFETFCDHGGA) are extracellular. A helical membrane pass occupies residues 164–184 (ALIASSAGLILMMIISVMSIM). Topologically, residues 185–195 (KLLIKPKSDSS) are cytoplasmic.

Belongs to the Casparian strip membrane proteins (CASP) family. Homodimer and heterodimers.

It is found in the cell membrane. The polypeptide is CASP-like protein 1B1 (Populus trichocarpa (Western balsam poplar)).